Consider the following 56-residue polypeptide: Bacteriocin sublancin-168 (56 aa).

A propeptide spanning residues 1–19 (MEKLFKEVKLEELENQKGS) is cleaved from the precursor. Cystine bridges form between Cys26/Cys55 and Cys33/Cys48. S-linked (Glc) cysteine; by host glycosylation is present at Cys41.

Monomer. Production of active sublancin-168 requires at least one thiol-disulfide oxidoreductase (BdbB or, in its absence, BdbC). Membrane translocation and cleavage of the precursor are probably performed by SunT.

It is found in the secreted. Its function is as follows. Bacteriocin active against Gram-positive bacteria. Inhibits B.cereus spore outgrowth, after the germination stage, approximately 1000-fold better than it inhibits exponential growth of the same cells. Inhibits B.subtilis strain ATCC 6633. This chain is Bacteriocin sublancin-168 (sunA), found in Bacillus pumilus (Bacillus mesentericus).